A 142-amino-acid polypeptide reads, in one-letter code: Hemoglobin subunit alpha (142 aa).

Position 1 is an N-acetylserine (S1). One can recognise a Globin domain in the interval 1 to 142; that stretch reads SLSEKNKAAV…VALALADRYR (142 aa). Residue H59 participates in O2 binding. Residue H88 participates in heme b binding.

Belongs to the globin family. In terms of assembly, heterotetramer of two alpha chains and two beta chains. In terms of tissue distribution, red blood cells.

Functionally, involved in oxygen transport from gills to the various peripheral tissues. The protein is Hemoglobin subunit alpha (hba) of Pagothenia borchgrevinki (Bald rockcod).